The following is a 471-amino-acid chain: 3-isopropylmalate dehydratase large subunit (471 aa).

The [4Fe-4S] cluster site is built by C347, C407, and C410.

The protein belongs to the aconitase/IPM isomerase family. LeuC type 1 subfamily. As to quaternary structure, heterodimer of LeuC and LeuD. The cofactor is [4Fe-4S] cluster.

The catalysed reaction is (2R,3S)-3-isopropylmalate = (2S)-2-isopropylmalate. It functions in the pathway amino-acid biosynthesis; L-leucine biosynthesis; L-leucine from 3-methyl-2-oxobutanoate: step 2/4. Functionally, catalyzes the isomerization between 2-isopropylmalate and 3-isopropylmalate, via the formation of 2-isopropylmaleate. The chain is 3-isopropylmalate dehydratase large subunit from Granulibacter bethesdensis (strain ATCC BAA-1260 / CGDNIH1).